We begin with the raw amino-acid sequence, 161 residues long: Protein PLANT CADMIUM RESISTANCE 12 (161 aa).

A helical transmembrane segment spans residues 71–89 (AGLIHLALGFIGCSWLYAF).

It belongs to the cornifelin family.

It is found in the membrane. May be involved in heavy metals transport. This chain is Protein PLANT CADMIUM RESISTANCE 12 (PCR12), found in Arabidopsis thaliana (Mouse-ear cress).